Here is a 527-residue protein sequence, read N- to C-terminus: Metal transporter Nramp6 (527 aa).

Helical transmembrane passes span 38 to 58 (FFSY…PGNF), 71 to 91 (ELLW…SLAA), 115 to 135 (FMLW…EVIG), 143 to 163 (LFNI…LILL), 173 to 193 (LEFL…VELH), 221 to 241 (ISLL…ALVL), 264 to 284 (GLAL…SGAV), 321 to 341 (LFAI…TYAG), 364 to 384 (CLAI…GAGK), 385 to 405 (LIII…VPLL), 427 to 447 (TWII…SSFI), and 458 to 478 (VAIV…LAAI).

The protein belongs to the NRAMP (TC 2.A.55) family. As to expression, expressed in the vascular bundles of shoots, cotyledons, young leaves, sepals and petals, at the top of the flower stem and in the style. Expressed in the peduncle of developing siliques as well as in the septum and the funiculi.

The protein localises to the endomembrane system. Probable intracellular cadmium (Cd) transporter that participates in the distribution or availability of Cd within the cell. This Arabidopsis thaliana (Mouse-ear cress) protein is Metal transporter Nramp6 (NRAMP6).